The sequence spans 304 residues: tRNA uridine(34) hydroxylase (304 aa).

The Rhodanese domain occupies glutamine 124 to serine 219. The active-site Cysteine persulfide intermediate is cysteine 179.

The protein belongs to the TrhO family.

It catalyses the reaction uridine(34) in tRNA + AH2 + O2 = 5-hydroxyuridine(34) in tRNA + A + H2O. Catalyzes oxygen-dependent 5-hydroxyuridine (ho5U) modification at position 34 in tRNAs. This chain is tRNA uridine(34) hydroxylase, found in Bartonella quintana (strain Toulouse) (Rochalimaea quintana).